Reading from the N-terminus, the 102-residue chain is Putative pterin-4-alpha-carbinolamine dehydratase (102 aa).

It belongs to the pterin-4-alpha-carbinolamine dehydratase family.

The catalysed reaction is (4aS,6R)-4a-hydroxy-L-erythro-5,6,7,8-tetrahydrobiopterin = (6R)-L-erythro-6,7-dihydrobiopterin + H2O. This chain is Putative pterin-4-alpha-carbinolamine dehydratase, found in Burkholderia orbicola (strain MC0-3).